Consider the following 487-residue polypeptide: 1,4-beta-D-glucan cellobiohydrolase CEL6A (487 aa).

The first 17 residues, 1-17, serve as a signal peptide directing secretion; that stretch reads MASKLFLAAALLQGALS. Residues 27–63 enclose the CBM1 domain; that stretch reads ACAAQWGQCGGQDYTGPTCCQSGSTCVVSNQWYSQCL. Disulfide bonds link Cys35–Cys52 and Cys46–Cys62. A compositionally biased stretch (low complexity) spans 64 to 117; sequence PGSSNPTTTSRTSTSSSSSTSRTSSSTSRPPSSVPTTPTSVPPTITTTPTTTPT. Residues 64-127 form a disordered region; that stretch reads PGSSNPTTTS…GGSGPGTTAS (64 aa). 2 residues coordinate substrate: Trp175 and Asp177. Residue Asp216 is part of the active site. Asp262 serves as the catalytic Proton donor. His307, Trp310, Asn346, Trp407, Lys435, and Glu439 together coordinate substrate. Catalysis depends on Asp441, which acts as the Proton acceptor.

This sequence belongs to the glycosyl hydrolase 6 (cellulase B) family.

The protein resides in the secreted. It carries out the reaction Hydrolysis of (1-&gt;4)-beta-D-glucosidic linkages in cellulose and cellotetraose, releasing cellobiose from the non-reducing ends of the chains.. Exoglucanase that plays an important function in biomass degradation by catalyzing the hydrolysis of the non-reducing end beta-1,4-glucosidic linkages in cellulose and cellotetraose to release cellobiose. Shows higher hydrolytic activities on phosphoric acid-swollen cellulose (PSC), beta-glucan, and cellooligosaccharide derivatives than on cellulose, of which the best substrates were cellooligosaccharides. The protein is 1,4-beta-D-glucan cellobiohydrolase CEL6A of Pyricularia oryzae (strain 70-15 / ATCC MYA-4617 / FGSC 8958) (Rice blast fungus).